A 493-amino-acid polypeptide reads, in one-letter code: Protein translocase subunit SecY (493 aa).

Over 1–21 the chain is Cytoplasmic; that stretch reads MDSVIRALQPYFERIPSVERP. Residues 22 to 48 form a helical membrane-spanning segment; it reads KGHVHFREKFGWTAAILLLYFILSNVP. Residues 49-59 are Extracellular-facing; that stretch reads VFGLSPESIDI. The helical intramembrane region spans 60–67; that stretch reads FAAYRALF. The chain crosses the membrane as a discontinuously helical span at residues 60 to 88; that stretch reads FAAYRALFAGSTGSIIALGIGPIVTASII. Residues 68–79 lie within the membrane without spanning it; it reads AGSTGSIIALGI. The segment at residues 80 to 88 is an intramembrane region (helical); the sequence is GPIVTASII. Over 89-109 the chain is Cytoplasmic; sequence LQLLVGAGIIKLDLTNPEDRA. Residues 110–134 traverse the membrane as a helical segment; that stretch reads AYQDFQRFLVFVMIAVEAIPQIAGG. Over 135–151 the chain is Extracellular; that stretch reads LLKPDLNLAAQLGVSPG. Residues 152-176 traverse the membrane as a helical segment; it reads IISFLIFIQLFIGGVLIVYMDEVVS. Over 177–182 the chain is Cytoplasmic; it reads KWGIGS. Residues 183 to 201 traverse the membrane as a helical segment; that stretch reads GVSLFILAGIAQSIVVGLF. The Extracellular portion of the chain corresponds to 202–244; sequence NWVIPPNSAMPAGIIPRWIWIAQNYPLDQLFTGSGLAFLLIQG. Residues 245 to 266 traverse the membrane as a helical segment; the sequence is GILALITTAAIILLVVFFEGTR. At 267–291 the chain is on the cytoplasmic side; that stretch reads VEIPLAHAVARGARGRFPIKLIYAS. A helical membrane pass occupies residues 292 to 313; sequence VLPMIFVRALQANVVALGQVLH. At 314–367 the chain is on the extracellular side; sequence ARGVTIFGEFVNGKAVSGLMFFLQPVSSPYDWIPSLVKSQGAAFAAIPDWMIYL. A helical membrane pass occupies residues 368–387; the sequence is HLLIDALILVVGGIIFAWFW. Residues 388–430 lie on the Cytoplasmic side of the membrane; it reads VETSGMDARTVASQIAKSGMQVPGFRKSPQVLERVLSRYIPKV. A helical membrane pass occupies residues 431-449; sequence TILGGAIIGILTLVANMLG. The Extracellular portion of the chain corresponds to 450 to 454; sequence TIGNV. The chain crosses the membrane as a helical span at residues 455–469; sequence SGTGLLLAVSIAYRF. Topologically, residues 470–493 are cytoplasmic; it reads YEDLAKEQLTEMHPLIRRMLGEEA.

The protein belongs to the SecY/SEC61-alpha family. As to quaternary structure, component of the Sec protein translocase complex. Heterotrimer consisting of alpha (SecY), beta (SecG) and gamma (SecE) subunits. The heterotrimers can form oligomers, although 1 heterotrimer is thought to be able to translocate proteins. Interacts with the ribosome. May interact with SecDF, and other proteins may be involved.

Its subcellular location is the cell membrane. Functionally, the central subunit of the protein translocation channel SecYEG. Consists of two halves formed by TMs 1-5 and 6-10. These two domains form a lateral gate at the front which open onto the bilayer between TMs 2 and 7, and are clamped together by SecE at the back. The channel is closed by both a pore ring composed of hydrophobic SecY resides and a short helix (helix 2A) on the extracellular side of the membrane which forms a plug. The plug probably moves laterally to allow the channel to open. The ring and the pore may move independently. The chain is Protein translocase subunit SecY from Archaeoglobus fulgidus (strain ATCC 49558 / DSM 4304 / JCM 9628 / NBRC 100126 / VC-16).